The primary structure comprises 349 residues: Dehydrogenase FPY6 (349 aa).

It belongs to the Gfo/Idh/MocA family.

The protein operates within secondary metabolite biosynthesis. In terms of biological role, dehydrogenase; part of the gene cluster that mediates the biosynthesis of the gamma-pyrones fusapyrone (FPY) and deoxyfusapyrone (dFPY). FPY is an undecaketide and thus likely synthesized by the polyketide synthase FPY1 from acetyl-CoA functioning as starter unit and the addition of 10 malonyl-CoA extender units by successive Claisen-condensations. Next to this, FPY shares some rare features: C-glycosylated 4-deoxyglucose at C-3, a gem-dimethyl group at C-13, and an alpha-beta to beta-gamma double bond shift at C-20. During FPY biosynthesis mono-C-methyl groups are transferred to the tetra-, penta-, hexa- and heptaketide, while two C-methyl groups are transferred to the nonaketide, suggesting that the CMet domain is programmed to selectively catalyze two successive C-alpha-methylation reactions of the nonaketide, while other alpha-carbons are non- or mono-methylated only. While the origin of the 4'-deoxyglucose moiety remains opaque, its transfer to C-3 is most likely mediated by the C-glycosyltransferase FPY2. Next to this, the hydroxyl group present at C-33 and discriminating between FPY and dFPY, is likely to be installed by the cytochrome P450 monooxygenase FPY7. No putative function can be predicted for the remaining genes FPY3-FPY6. The protein is Dehydrogenase FPY6 of Fusarium mangiferae (Mango malformation disease fungus).